Reading from the N-terminus, the 584-residue chain is Phenylalanine--tRNA ligase beta subunit (584 aa).

The region spanning 290–369 (FSVRTKTVTH…RALGFNSLEP (80 aa)) is the B5 domain. Mg(2+) is bound by residues D347, D353, D356, and D357.

The protein belongs to the phenylalanyl-tRNA synthetase beta subunit family. Type 2 subfamily. In terms of assembly, tetramer of two alpha and two beta subunits. It depends on Mg(2+) as a cofactor.

It localises to the cytoplasm. It catalyses the reaction tRNA(Phe) + L-phenylalanine + ATP = L-phenylalanyl-tRNA(Phe) + AMP + diphosphate + H(+). The sequence is that of Phenylalanine--tRNA ligase beta subunit from Haloarcula marismortui (strain ATCC 43049 / DSM 3752 / JCM 8966 / VKM B-1809) (Halobacterium marismortui).